The sequence spans 312 residues: tRNA-cytidine(32) 2-sulfurtransferase (312 aa).

A PP-loop motif motif is present at residues 39 to 44 (SGGKDS). Positions 114, 117, and 205 each coordinate [4Fe-4S] cluster.

Belongs to the TtcA family. As to quaternary structure, homodimer. It depends on Mg(2+) as a cofactor. The cofactor is [4Fe-4S] cluster.

It is found in the cytoplasm. It carries out the reaction cytidine(32) in tRNA + S-sulfanyl-L-cysteinyl-[cysteine desulfurase] + AH2 + ATP = 2-thiocytidine(32) in tRNA + L-cysteinyl-[cysteine desulfurase] + A + AMP + diphosphate + H(+). It participates in tRNA modification. Functionally, catalyzes the ATP-dependent 2-thiolation of cytidine in position 32 of tRNA, to form 2-thiocytidine (s(2)C32). The sulfur atoms are provided by the cysteine/cysteine desulfurase (IscS) system. In Cupriavidus pinatubonensis (strain JMP 134 / LMG 1197) (Cupriavidus necator (strain JMP 134)), this protein is tRNA-cytidine(32) 2-sulfurtransferase.